Reading from the N-terminus, the 75-residue chain is Small ribosomal subunit protein bS18 (75 aa).

This sequence belongs to the bacterial ribosomal protein bS18 family. As to quaternary structure, part of the 30S ribosomal subunit. Forms a tight heterodimer with protein bS6.

Functionally, binds as a heterodimer with protein bS6 to the central domain of the 16S rRNA, where it helps stabilize the platform of the 30S subunit. This chain is Small ribosomal subunit protein bS18, found in Baumannia cicadellinicola subsp. Homalodisca coagulata.